The primary structure comprises 357 residues: Dihydroorotate dehydrogenase (quinone) (357 aa).

FMN contacts are provided by residues 65–69 and threonine 89; that span reads AGLDK. Lysine 69 lines the substrate pocket. 114–118 lines the substrate pocket; the sequence is NRFGF. Positions 156 and 189 each coordinate FMN. Position 189 (asparagine 189) interacts with substrate. The Nucleophile role is filled by serine 192. Substrate is bound at residue asparagine 194. The FMN site is built by lysine 234 and threonine 262. 263–264 provides a ligand contact to substrate; that stretch reads NT. FMN-binding positions include glycine 285, glycine 314, and 335 to 336; that span reads YT.

Belongs to the dihydroorotate dehydrogenase family. Type 2 subfamily. In terms of assembly, monomer. It depends on FMN as a cofactor.

It is found in the cell membrane. It carries out the reaction (S)-dihydroorotate + a quinone = orotate + a quinol. The protein operates within pyrimidine metabolism; UMP biosynthesis via de novo pathway; orotate from (S)-dihydroorotate (quinone route): step 1/1. Functionally, catalyzes the conversion of dihydroorotate to orotate with quinone as electron acceptor. The polypeptide is Dihydroorotate dehydrogenase (quinone) (Albidiferax ferrireducens (strain ATCC BAA-621 / DSM 15236 / T118) (Rhodoferax ferrireducens)).